A 420-amino-acid chain; its full sequence is Putative U-box domain-containing protein 58 (420 aa).

Residues 4–168 enclose the MIF4G domain; the sequence is NSYVLFARLC…EDALAMKKED (165 aa). Residues 139 to 352 are a coiled coil; sequence SRVVELEGNY…TAKEQMEKRQ (214 aa). The U-box domain maps to 352-420; the sequence is QPPSSFFCPI…ALRSAIEELV (69 aa).

The catalysed reaction is S-ubiquitinyl-[E2 ubiquitin-conjugating enzyme]-L-cysteine + [acceptor protein]-L-lysine = [E2 ubiquitin-conjugating enzyme]-L-cysteine + N(6)-ubiquitinyl-[acceptor protein]-L-lysine.. Its pathway is protein modification; protein ubiquitination. Functions as an E3 ubiquitin ligase. This is Putative U-box domain-containing protein 58 (PUB58) from Arabidopsis thaliana (Mouse-ear cress).